Consider the following 407-residue polypeptide: Proteasome-activating nucleotidase (407 aa).

Residues 22–67 are a coiled coil; that stretch reads KEKTQIAELESKVLRLELKNKDISRENVQIKKENEILKRELDKLRI. ATP-binding positions include 192–197 and His331; that span reads GTGKTL. The segment at 405–407 is docks into pockets in the proteasome alpha-ring to cause gate opening; it reads MYG.

Belongs to the AAA ATPase family. In terms of assembly, homohexamer. The hexameric complex has a two-ring architecture resembling a top hat that caps the 20S proteasome core at one or both ends. Upon ATP-binding, the C-terminus of PAN interacts with the alpha-rings of the proteasome core by binding to the intersubunit pockets.

Its subcellular location is the cytoplasm. In terms of biological role, ATPase which is responsible for recognizing, binding, unfolding and translocation of substrate proteins into the archaeal 20S proteasome core particle. Is essential for opening the gate of the 20S proteasome via an interaction with its C-terminus, thereby allowing substrate entry and access to the site of proteolysis. Thus, the C-termini of the proteasomal ATPase function like a 'key in a lock' to induce gate opening and therefore regulate proteolysis. Unfolding activity requires energy from ATP hydrolysis, whereas ATP binding alone promotes ATPase-20S proteasome association which triggers gate opening, and supports translocation of unfolded substrates. The sequence is that of Proteasome-activating nucleotidase from Methanococcus maripaludis (strain C6 / ATCC BAA-1332).